We begin with the raw amino-acid sequence, 122 residues long: Methylglyoxal synthase (122 aa).

One can recognise an MGS-like domain in the interval 1–122 (MRIALIAHDK…DLFIKHLKGK (122 aa)). Substrate contacts are provided by residues His8, Lys12, 34 to 37 (TGTT), and 54 to 55 (SG). The Proton donor/acceptor role is filled by Asp60. His87 contacts substrate.

The protein belongs to the methylglyoxal synthase family.

The catalysed reaction is dihydroxyacetone phosphate = methylglyoxal + phosphate. Functionally, catalyzes the formation of methylglyoxal from dihydroxyacetone phosphate. This Acholeplasma laidlawii (strain PG-8A) protein is Methylglyoxal synthase.